The following is a 79-amino-acid chain: uncharacterized protein (79 aa).

This is an uncharacterized protein from Escherichia coli (strain K12).